The following is a 1352-amino-acid chain: Patatin-like phospholipase domain-containing protein 7 (1352 aa).

Topologically, residues 1 to 36 (MQNEEDACLEAGYCLGTTLSSWRLHFMEEQSQSTML) are lumenal. A helical transmembrane segment spans residues 37 to 57 (MGIGIGALLTLAFVGITFFFV). The Cytoplasmic portion of the chain corresponds to 58-1352 (YRRVRRLRRA…DQGPRLEHPS (1295 aa)). 170–297 (VLGHFEKPLF…VRVVQIIMVR (128 aa)) serves as a coordination point for a nucleoside 3',5'-cyclic phosphate. The disordered stretch occupies residues 340–364 (MSYGPEEQLERSLRPSEFSSSDHGS). Residues S341 and S379 each carry the phosphoserine modification. Residues 384-411 (SNHGEVDELRQSQGSGSNTSAFQESHEG) form a disordered region. Polar residues predominate over residues 394–406 (QSQGSGSNTSAFQ). A nucleoside 3',5'-cyclic phosphate is bound by residues 499 to 585 (FLHV…YEIM) and 613 to 718 (ALDW…LGEK). Residues 681 to 967 (VHAVRDSELA…RGCAQVGILR (287 aa)) are involved in the binding to lipid droplets. Residues 950–1116 (LVLGGGGARG…INNLPADVAR (167 aa)) form the PNPLA domain. The GXGXXG signature appears at 954–959 (GGGARG). The GXSXG motif lies at 981-985 (GTSIG). S983 acts as the Nucleophile in catalysis. Catalysis depends on D1103, which acts as the Proton acceptor. Residues 1103-1105 (DGG) carry the DGA/G motif. S1280 is subject to Phosphoserine. T1284 carries the phosphothreonine modification. The disordered stretch occupies residues 1295–1352 (KETYADFQSTGIELDSDSEYEPSMLQGPPSLTSPEQSQDSFPWLPNQDDQGPRLEHPS). A compositionally biased stretch (polar residues) spans 1323 to 1334 (PSLTSPEQSQDS).

The protein belongs to the NTE family. Expressed in white and brown adipose tissue, cardiac muscle, skeletal muscle, and testis. In terms of tissue distribution, expressed in white adipose tissue, cardiac muscle, skeletal muscle, and testis.

It localises to the endoplasmic reticulum membrane. The protein resides in the lipid droplet. The catalysed reaction is a 1-acyl-sn-glycero-3-phosphocholine + H2O = sn-glycerol 3-phosphocholine + a fatty acid + H(+). The enzyme catalyses 1-(9Z-octadecenoyl)-sn-glycero-3-phosphocholine + H2O = sn-glycerol 3-phosphocholine + (9Z)-octadecenoate + H(+). It carries out the reaction 1-(9Z-octadecenoyl)-sn-glycero-3-phosphoethanolamine + H2O = sn-glycero-3-phosphoethanolamine + (9Z)-octadecenoate + H(+). It catalyses the reaction 1-(9Z-octadecenoyl)-sn-glycero-3-phospho-L-serine + H2O = sn-glycero-3-phospho-L-serine + (9Z)-octadecenoate + H(+). The catalysed reaction is 1-hexadecanoyl-sn-glycero-3-phosphocholine + H2O = sn-glycerol 3-phosphocholine + hexadecanoate + H(+). The enzyme catalyses 1-hexadecanoyl-sn-glycero-3-phosphate + H2O = sn-glycerol 3-phosphate + hexadecanoate + H(+). CAMP does not regulate lysophospholipase activity in vitro. Slightly inhibited by organophosphorus (OP) compounds such as mipafox, which is likely why mice are less sensitive to distal axonophathy induced by OPs compared to humans. In terms of biological role, lysophospholipase which preferentially deacylates unsaturated lysophosphatidylcholine (C18:1), generating glycerophosphocholine. Can also deacylate, to a lesser extent, lysophosphatidylethanolamine (C18:1), lysophosphatidyl-L-serine (C18:1) and lysophosphatidic acid (C16:0). Lysophospholipase. Its function is as follows. Lacks lysophospholipase activity. In Mus musculus (Mouse), this protein is Patatin-like phospholipase domain-containing protein 7 (Pnpla7).